We begin with the raw amino-acid sequence, 59 residues long: uncharacterized protein (59 aa).

This is an uncharacterized protein from Dictyostelium discoideum (Social amoeba).